The primary structure comprises 488 residues: 3-octaprenyl-4-hydroxybenzoate carboxy-lyase (488 aa).

Asparagine 172 contributes to the Mn(2+) binding site. Prenylated FMN contacts are provided by residues 175-177 (IYR), 189-191 (RWL), and 194-195 (RG). Mn(2+) is bound at residue glutamate 238. Aspartate 287 serves as the catalytic Proton donor.

It belongs to the UbiD family. Homohexamer. It depends on prenylated FMN as a cofactor. The cofactor is Mn(2+).

The protein localises to the cell membrane. It catalyses the reaction a 4-hydroxy-3-(all-trans-polyprenyl)benzoate + H(+) = a 2-(all-trans-polyprenyl)phenol + CO2. Its pathway is cofactor biosynthesis; ubiquinone biosynthesis. Catalyzes the decarboxylation of 3-octaprenyl-4-hydroxy benzoate to 2-octaprenylphenol, an intermediate step in ubiquinone biosynthesis. The sequence is that of 3-octaprenyl-4-hydroxybenzoate carboxy-lyase from Pseudomonas putida (strain GB-1).